The primary structure comprises 63 residues: Phylloseptin-Az1 (63 aa).

A signal peptide spans 1–19; the sequence is LKKSLFLVVFLGLATLSIC. A propeptide spanning residues 20 to 41 is cleaved from the precursor; the sequence is EEEKRETEEEEYNQGEDDKSEE. Position 62 is a phenylalanine amide (phenylalanine 62).

As to expression, expressed by the skin glands.

Its subcellular location is the secreted. Its function is as follows. Has antimicrobial activity. This is Phylloseptin-Az1 from Pithecopus azureus (Orange-legged monkey tree frog).